Reading from the N-terminus, the 92-residue chain is Small ribosomal subunit protein bS20 (92 aa).

A disordered region spans residues 1–23 (MANTTSAKKATRKIARRTDVNKA).

It belongs to the bacterial ribosomal protein bS20 family.

In terms of biological role, binds directly to 16S ribosomal RNA. The protein is Small ribosomal subunit protein bS20 of Rhizobium etli (strain CIAT 652).